A 411-amino-acid chain; its full sequence is Corticotropin-releasing factor receptor 2 (411 aa).

Residues 1 to 19 constitute a signal peptide (not cleaved); the sequence is MDAALLLSLLEANCSLALA. Over 1-108 the chain is Extracellular; the sequence is MDAALLLSLL…EPILDDKQRK (108 aa). 5 N-linked (GlcNAc...) asparagine glycosylation sites follow: Asn-13, Asn-41, Asn-74, Asn-86, and Asn-94. Disulfide bonds link Cys-14–Cys-50, Cys-40–Cys-83, and Cys-64–Cys-98. A helical transmembrane segment spans residues 109-139; the sequence is YDLHYRIALIVNYLGHCVSVVALVAAFLLFL. The Cytoplasmic portion of the chain corresponds to 140–146; the sequence is VLRSIRC. Residues 147–171 form a helical membrane-spanning segment; it reads LRNVIHWNLITTFILRNIAWFLLQL. Topologically, residues 172-185 are extracellular; the sequence is IDHEVHEGNEVWCR. Cys-184 and Cys-254 are disulfide-bonded. The helical transmembrane segment at 186 to 214 threads the bilayer; the sequence is CITTIFNYFVVTNFFWMFVEGCYLHTAIV. At 215 to 221 the chain is on the cytoplasmic side; it reads MTYSTEH. The helical transmembrane segment at 222-249 threads the bilayer; sequence LRKWLFLFIGWCIPCPIIIAWAVGKLYY. Residues 250–265 are Extracellular-facing; the sequence is ENEQCWFGKEAGDLVD. The helical transmembrane segment at 266-291 threads the bilayer; it reads YIYQGPVMLVLLINFVFLFNIVRILM. Topologically, residues 292 to 302 are cytoplasmic; the sequence is TKLRASTTSET. Residues 303–327 form a helical membrane-spanning segment; the sequence is IQYRKAVKATLVLLPLLGITYMLFF. The Extracellular segment spans residues 328–334; it reads VNPGEDD. The chain crosses the membrane as a helical span at residues 335–364; that stretch reads LSQIVFIYFNSFLQSFQGFFVSVFYCFFNG. Topologically, residues 365–411 are cytoplasmic; that stretch reads EVRAALRKRWHRWQDHHALRVPVARAMSIPTSPTRISFHSIKQTAAV.

This sequence belongs to the G-protein coupled receptor 2 family. In terms of assembly, monomer. Interacts with CRF, UCN, UCN2 and UCN3. An N-glycosylation site within the signal peptide impedes its proper cleavage and function. As to expression, highly expressed in the heart. Also expressed in lungs, skeletal muscle, gastrointestinal tract, epididymis, and brain.

The protein resides in the cell membrane. Functionally, G-protein coupled receptor for CRH (corticotropin-releasing factor), UCN (urocortin), UCN2 and UCN3. Has high affinity for UCN. Ligand binding causes a conformation change that triggers signaling via guanine nucleotide-binding proteins (G proteins) and down-stream effectors, such as adenylate cyclase. Promotes the activation of adenylate cyclase, leading to increased intracellular cAMP levels. This chain is Corticotropin-releasing factor receptor 2 (Crhr2), found in Mus musculus (Mouse).